The following is a 216-amino-acid chain: Elongation factor Ts (216 aa).

Positions 81-84 (TDFV) are involved in Mg(2+) ion dislocation from EF-Tu.

This sequence belongs to the EF-Ts family.

The protein resides in the cytoplasm. Its function is as follows. Associates with the EF-Tu.GDP complex and induces the exchange of GDP to GTP. It remains bound to the aminoacyl-tRNA.EF-Tu.GTP complex up to the GTP hydrolysis stage on the ribosome. The protein is Elongation factor Ts of Geotalea uraniireducens (strain Rf4) (Geobacter uraniireducens).